The following is a 212-amino-acid chain: UPF0502 protein ECA2523 (212 aa).

The protein belongs to the UPF0502 family.

The sequence is that of UPF0502 protein ECA2523 from Pectobacterium atrosepticum (strain SCRI 1043 / ATCC BAA-672) (Erwinia carotovora subsp. atroseptica).